The following is a 146-amino-acid chain: Putative phosphotransferase enzyme IIA component YadI (146 aa).

The PTS EIIA type-4 domain occupies 1-124 (MLGWVITCHD…RIVELGAPEV (124 aa)). Catalysis depends on H9, which acts as the Tele-phosphohistidine intermediate.

It localises to the cytoplasm. Its function is as follows. The phosphoenolpyruvate-dependent sugar phosphotransferase system (sugar PTS), a major carbohydrate active -transport system, catalyzes the phosphorylation of incoming sugar substrates concomitantly with their translocation across the cell membrane. The chain is Putative phosphotransferase enzyme IIA component YadI (yadI) from Escherichia coli (strain K12).